The sequence spans 1155 residues: DNA-directed RNA polymerase subunit beta (1155 aa).

The protein belongs to the RNA polymerase beta chain family. As to quaternary structure, the RNAP catalytic core consists of 2 alpha, 1 beta, 1 beta' and 1 omega subunit. When a sigma factor is associated with the core the holoenzyme is formed, which can initiate transcription.

It carries out the reaction RNA(n) + a ribonucleoside 5'-triphosphate = RNA(n+1) + diphosphate. Its function is as follows. DNA-dependent RNA polymerase catalyzes the transcription of DNA into RNA using the four ribonucleoside triphosphates as substrates. This is DNA-directed RNA polymerase subunit beta from Borrelia duttonii (strain Ly).